Consider the following 278-residue polypeptide: Sulfur carrier protein FdhD (278 aa).

Cys-121 (cysteine persulfide intermediate) is an active-site residue. 260 to 265 (FCKPGR) is a binding site for Mo-bis(molybdopterin guanine dinucleotide).

Belongs to the FdhD family.

Its subcellular location is the cytoplasm. Required for formate dehydrogenase (FDH) activity. Acts as a sulfur carrier protein that transfers sulfur from IscS to the molybdenum cofactor prior to its insertion into FDH. This Klebsiella pneumoniae subsp. pneumoniae (strain ATCC 700721 / MGH 78578) protein is Sulfur carrier protein FdhD.